Here is a 304-residue protein sequence, read N- to C-terminus: Ubiquitin thioesterase OTU1 (304 aa).

Residues 5–83 (RCKTREGTQL…IVEEDKSKLR (79 aa)) form a UBX-like region. An OTU domain is found at 105–230 (IVRRVVPADN…GIHYDPLQRQ (126 aa)). The tract at residues 110–116 (VPADNSC) is cys-loop. Aspartate 113 is a catalytic residue. Catalysis depends on cysteine 116, which acts as the Nucleophile. The variable-loop stretch occupies residues 169–179 (IRREDTWGGAI). Positions 219-223 (YDGIH) are his-loop. A substrate-binding site is contributed by isoleucine 222. Histidine 223 is a catalytic residue. The tract at residues 247–252 (DEALVQ) is S2 site. A C2H2-type zinc finger spans residues 274-298 (LRCMACQKGLTGQSAARDHAKETGH). Histidine 298 is an active-site residue.

It is found in the cytoplasm. The catalysed reaction is Thiol-dependent hydrolysis of ester, thioester, amide, peptide and isopeptide bonds formed by the C-terminal Gly of ubiquitin (a 76-residue protein attached to proteins as an intracellular targeting signal).. Hydrolase that can remove conjugated ubiquitin from proteins and participates in endoplasmic reticulum-associated degradation (ERAD) for misfolded lumenal proteins. May act by triming the ubiquitin chain on the associated substrate to facilitate their threading through the VCP/p97 pore. Ubiquitin moieties on substrates may present a steric impediment to the threading process when the substrate is transferred to the VCP pore and threaded through VCP's axial channel. Mediates deubiquitination of 'Lys-27'-, 'Lys-29'- and 'Lys-33'-linked polyubiquitin chains. Also able to hydrolyze 'Lys-11'-linked ubiquitin chains. Cleaves both polyubiquitin and di-ubiquitin. The chain is Ubiquitin thioesterase OTU1 (yod1) from Xenopus laevis (African clawed frog).